Reading from the N-terminus, the 656-residue chain is ATP-dependent zinc metalloprotease FtsH (656 aa).

Over 1–10 (MGDNRWLKNS) the chain is Cytoplasmic. The helical transmembrane segment at 11–31 (FVYLIILVAALALFFQYLGPG) threads the bilayer. Topologically, residues 32-116 (ASQTEEKGIA…IVQPAPAWGG (85 aa)) are extracellular. The chain crosses the membrane as a helical span at residues 117–137 (LLSIFTILLPTLLLIGFFVFF). Over 138–656 (MRQAQGSNNQ…GLGGPSPLPA (519 aa)) the chain is Cytoplasmic. 209–216 (GPPGTGKT) lines the ATP pocket. Residue His432 participates in Zn(2+) binding. Glu433 is a catalytic residue. Zn(2+)-binding residues include His436 and Asp511. Positions 622 to 632 (FSKSGSTTPNG) are enriched in polar residues. A disordered region spans residues 622-656 (FSKSGSTTPNGRTEDRPAQPDAPQMGLGGPSPLPA).

It in the central section; belongs to the AAA ATPase family. The protein in the C-terminal section; belongs to the peptidase M41 family. Homohexamer. Zn(2+) serves as cofactor.

It is found in the cell membrane. Acts as a processive, ATP-dependent zinc metallopeptidase for both cytoplasmic and membrane proteins. Plays a role in the quality control of integral membrane proteins. This Chloroflexus aggregans (strain MD-66 / DSM 9485) protein is ATP-dependent zinc metalloprotease FtsH.